We begin with the raw amino-acid sequence, 707 residues long: DNA ligase (707 aa).

NAD(+) is bound by residues 48-52, 97-98, and E134; these read DAEYD and SI. K136 (N6-AMP-lysine intermediate) is an active-site residue. The NAD(+) site is built by R157, E193, K320, and K344. C438, C441, C456, and C462 together coordinate Zn(2+). Positions 621–707 constitute a BRCT domain; it reads VAPKPLSGKT…DSPPDERIPA (87 aa).

The protein belongs to the NAD-dependent DNA ligase family. LigA subfamily. Mg(2+) is required as a cofactor. The cofactor is Mn(2+).

It carries out the reaction NAD(+) + (deoxyribonucleotide)n-3'-hydroxyl + 5'-phospho-(deoxyribonucleotide)m = (deoxyribonucleotide)n+m + AMP + beta-nicotinamide D-nucleotide.. DNA ligase that catalyzes the formation of phosphodiester linkages between 5'-phosphoryl and 3'-hydroxyl groups in double-stranded DNA using NAD as a coenzyme and as the energy source for the reaction. It is essential for DNA replication and repair of damaged DNA. The protein is DNA ligase of Polaromonas naphthalenivorans (strain CJ2).